We begin with the raw amino-acid sequence, 144 residues long: Large ribosomal subunit protein uL22 (144 aa).

Residues 123 to 144 (ELVKKRTMGHKKEKAKQKQKQQ) are disordered. Basic residues predominate over residues 125–144 (VKKRTMGHKKEKAKQKQKQQ).

This sequence belongs to the universal ribosomal protein uL22 family. As to quaternary structure, part of the 50S ribosomal subunit.

This protein binds specifically to 23S rRNA; its binding is stimulated by other ribosomal proteins, e.g. L4, L17, and L20. It is important during the early stages of 50S assembly. It makes multiple contacts with different domains of the 23S rRNA in the assembled 50S subunit and ribosome. In terms of biological role, the globular domain of the protein is located near the polypeptide exit tunnel on the outside of the subunit, while an extended beta-hairpin is found that lines the wall of the exit tunnel in the center of the 70S ribosome. The sequence is that of Large ribosomal subunit protein uL22 from Mycoplasma genitalium (strain ATCC 33530 / DSM 19775 / NCTC 10195 / G37) (Mycoplasmoides genitalium).